A 287-amino-acid chain; its full sequence is ATP synthase subunit a (287 aa).

6 helical membrane-spanning segments follow: residues leucine 37–alanine 57, phenylalanine 96–leucine 116, aspartate 144–isoleucine 164, proline 187–alanine 207, glutamate 224–valine 244, and threonine 266–alanine 286.

Belongs to the ATPase A chain family. In terms of assembly, F-type ATPases have 2 components, CF(1) - the catalytic core - and CF(0) - the membrane proton channel. CF(1) has five subunits: alpha(3), beta(3), gamma(1), delta(1), epsilon(1). CF(0) has three main subunits: a(1), b(2) and c(9-12). The alpha and beta chains form an alternating ring which encloses part of the gamma chain. CF(1) is attached to CF(0) by a central stalk formed by the gamma and epsilon chains, while a peripheral stalk is formed by the delta and b chains.

It is found in the cell inner membrane. Its function is as follows. Key component of the proton channel; it plays a direct role in the translocation of protons across the membrane. The protein is ATP synthase subunit a of Acidovorax ebreus (strain TPSY) (Diaphorobacter sp. (strain TPSY)).